Here is a 269-residue protein sequence, read N- to C-terminus: MGTESGSDPESSSNGWSRARGLVVKTLVLIGGALLIKRLTKSTTRRDHARVVSRSLTGEKFTREQASRDPDNYFNIRMLSCPAAEMVDGSEVLYLEQAFWRTPQKPFRQRLYMVKPCPKELKCDVEVSSYAIRDAEEYKNFCDRPKDQRPLPEEVIGDIGEHLTTIHLNCCDRGKRCLYEGSTSPGGFPNSWNGASYCTSDLAVLKNNEIHLWDRGFDENRNQVWGPKEGPYEFKPATSSSINENLSALNILYQSSIDKPIQGSLILQD.

A helical transmembrane segment spans residues 19–36; that stretch reads ARGLVVKTLVLIGGALLI.

It belongs to the CpcT/CpeT biliprotein lyase family. Mostly expressed in shoot apices, to a lower extent, in leaves, inflorescence stems, buds and cotyledons, and, at low levels, in roots and siliques.

The protein resides in the plastid. Its subcellular location is the chloroplast outer membrane. Its function is as follows. Covalently attaches a chromophore to Cys residue(s) of phycobiliproteins. Required for plastid division, and involved in cell differentiation and regulation of the cell division plane. Maintenance of plastid homeostasis controls plant preconditioning to stress and stress acclimation. Confers sensitivity to cabbage leaf curl virus (CaLCuV), probably by supporting viral movement. The polypeptide is Chromophore lyase CRL, chloroplastic (CRL) (Arabidopsis thaliana (Mouse-ear cress)).